The following is a 417-amino-acid chain: Phosphoglycerate kinase 1 (417 aa).

S2 carries the post-translational modification N-acetylserine. 2 positions are modified to phosphoserine: S2 and S4. K6 is modified (N6-succinyllysine). N6-acetyllysine is present on K11. (2R)-3-phosphoglycerate contacts are provided by V23, D24, F25, N26, Q38, and R39. A mitochondrial targeting region exposed following cis-trans isomerization by PIN1 and recognized by the TOM complex for mitochondrial translocation of the protein region spans residues 38-43 (QRIKAA). The residue at position 48 (K48) is an N6-acetyllysine; alternate. An N6-succinyllysine; alternate modification is found at K48. The (2R)-3-phosphoglycerate site is built by S62, H63, G65, and R66. N6-acetyllysine is present on K75. Residue Y76 is modified to Phosphotyrosine. 2 positions are modified to N6-acetyllysine: K86 and K91. K97 bears the N6-acetyllysine; alternate mark. N6-(2-hydroxyisobutyryl)lysine; alternate is present on K97. Residues L122 and R123 each contribute to the (2R)-3-phosphoglycerate site. K131 carries the post-translational modification N6-acetyllysine; alternate. The residue at position 131 (K131) is an N6-malonyllysine; alternate. N6-acetyllysine is present on K146. The (2R)-3-phosphoglycerate site is built by H170 and R171. K191 carries the post-translational modification N6-succinyllysine. At Y196 the chain carries Phosphotyrosine. Residue K199 is modified to N6-acetyllysine. Position 203 is a phosphoserine (S203). G214 contacts ADP. A CDP-binding site is contributed by G214. AMP-binding residues include A215 and K216. Position 215 (A215) interacts with ATP. Residue A215 coordinates Mg(2+). An N6-(2-hydroxyisobutyryl)lysine modification is found at K216. Mg(2+) is bound by residues A218 and D219. Residue D219 coordinates CDP. K220 is a binding site for AMP. Residue K220 participates in ATP binding. K220 carries the N6-(2-hydroxyisobutyryl)lysine modification. G238 contacts ADP. G238 provides a ligand contact to CDP. AMP is bound at residue G239. G239 is a binding site for ATP. N6-acetyllysine occurs at positions 267 and 291. An AMP-binding site is contributed by G313. G313 is an ATP binding site. An N6-(2-hydroxyisobutyryl)lysine modification is found at K323. CDP-binding residues include G338, V340, and F343. F343 contacts ADP. E344 serves as a coordination point for AMP. E344 contacts ATP. K361 bears the N6-acetyllysine mark. The ATP site is built by D375 and T376. D375 is a binding site for Mg(2+).

Belongs to the phosphoglycerate kinase family. As to quaternary structure, monomer. Interacts with kinase MAPK1/ERK2; the interaction is direct, occurs under hypoxic conditions, and promotes its interaction with PIN1. Interacts with peptidyl-prolyl cis-trans isomerase PIN1; the interaction is direct, occurs under hypoxic conditions, and targets the protein to the mitochondrion by promoting interactions with the TOM complex. Interacts with mitochondrial circRNA mcPGK1 (via its 2nd stem-loop); the interaction is direct and targets the protein to the mitochondrion by promoting interactions with the TOM complex. Interacts with pyruvate dehydrogenase kinase PDK1; the interaction is direct, occurs under hypoxic conditions and leads to PDK1-mediated inhibition of pyruvate dehydrogenase complex activity. Mg(2+) serves as cofactor. Post-translationally, phosphorylated at Ser-203 by MAPK1/ERK2 under hypoxic conditions, which promotes its mitochondrial targeting.

The protein resides in the cytoplasm. Its subcellular location is the cytosol. It is found in the mitochondrion matrix. The catalysed reaction is (2R)-3-phosphoglycerate + ATP = (2R)-3-phospho-glyceroyl phosphate + ADP. It catalyses the reaction L-seryl-[protein] + ATP = O-phospho-L-seryl-[protein] + ADP + H(+). Its pathway is carbohydrate degradation; glycolysis; pyruvate from D-glyceraldehyde 3-phosphate: step 2/5. Its function is as follows. Catalyzes one of the two ATP producing reactions in the glycolytic pathway via the reversible conversion of 1,3-diphosphoglycerate to 3-phosphoglycerate. Both L- and D- forms of purine and pyrimidine nucleotides can be used as substrates, but the activity is much lower on pyrimidines. In addition to its role as a glycolytic enzyme, it seems that PGK-1 acts as a polymerase alpha cofactor protein (primer recognition protein). Acts as a protein kinase when localized to the mitochondrion where it phosphorylates pyruvate dehydrogenase kinase PDK1 to inhibit pyruvate dehydrogenase complex activity and suppress the formation of acetyl-coenzyme A from pyruvate, and consequently inhibit oxidative phosphorylation and promote glycolysis. May play a role in sperm motility. This chain is Phosphoglycerate kinase 1 (PGK1), found in Sus scrofa (Pig).